Consider the following 55-residue polypeptide: Large ribosomal subunit protein bL33 (55 aa).

Belongs to the bacterial ribosomal protein bL33 family.

In Mesorhizobium japonicum (strain LMG 29417 / CECT 9101 / MAFF 303099) (Mesorhizobium loti (strain MAFF 303099)), this protein is Large ribosomal subunit protein bL33.